The following is a 37-amino-acid chain: L-amino-acid oxidase (37 aa).

It belongs to the flavin monoamine oxidase family. FIG1 subfamily. In terms of assembly, homodimer; non-covalently linked. FAD is required as a cofactor. Post-translationally, N-Glycosylated. In terms of tissue distribution, expressed by the venom gland.

Its subcellular location is the secreted. The catalysed reaction is an L-alpha-amino acid + O2 + H2O = a 2-oxocarboxylate + H2O2 + NH4(+). The enzyme catalyses L-leucine + O2 + H2O = 4-methyl-2-oxopentanoate + H2O2 + NH4(+). It catalyses the reaction L-phenylalanine + O2 + H2O = 3-phenylpyruvate + H2O2 + NH4(+). It carries out the reaction L-tryptophan + O2 + H2O = indole-3-pyruvate + H2O2 + NH4(+). The catalysed reaction is L-methionine + O2 + H2O = 4-methylsulfanyl-2-oxobutanoate + H2O2 + NH4(+). The enzyme catalyses L-isoleucine + O2 + H2O = (S)-3-methyl-2-oxopentanoate + H2O2 + NH4(+). It catalyses the reaction L-arginine + O2 + H2O = 5-guanidino-2-oxopentanoate + H2O2 + NH4(+). It carries out the reaction L-histidine + O2 + H2O = 3-(imidazol-5-yl)pyruvate + H2O2 + NH4(+). The catalysed reaction is L-valine + O2 + H2O = 3-methyl-2-oxobutanoate + H2O2 + NH4(+). Its function is as follows. Catalyzes an oxidative deamination of predominantly hydrophobic and aromatic L-amino acids, thus producing hydrogen peroxide that may contribute to the diverse toxic effects of this enzyme. Is highly active on L-Leu, L-Met, moderately active on L-Arg, L-Trp, L-Phe, L-Val, L-His, and L-Ile, and is weakly or not active on L-Cys, L-Lys, L-Ala, L-Thr, L-Asp, L-Ser, and L-Pro. Exhibits diverse biological activities, such as hemorrhage, edema, apoptosis of vascular endothelial cells or tumor cell lines, as well as regulation of platelet aggregation. Effects of snake L-amino oxidases on platelets are controversial, since they either induce aggregation or inhibit agonist-induced aggregation. These different effects are probably due to different experimental conditions. This protein induce hemolysis and has antibacterial and antiparasitic activities (against the Gram-positive S.aureus). Tested in vivo, this protein significantly inhibits Ehrlich ascite tumors growth and induces an influx of polymorphonuclear cells, as well as spontaneous liberation of hydrogen peroxide from peritoneal macrophages. The protein is L-amino-acid oxidase of Bothrops jararaca (Jararaca).